Reading from the N-terminus, the 582-residue chain is Potassium voltage-gated channel subfamily KQT member 1 (582 aa).

Topologically, residues 1–31 (RVSIYSARRPLLARTHIQGRVYNFLERPTGW) are cytoplasmic. A helical membrane pass occupies residues 32–53 (KCFVYHFAVFLIVLVCLIFSVL). The Extracellular segment spans residues 54 to 64 (STIEQYVALAT). Residues 65 to 87 (GTLFWMEIVLVVFFGTEYVVRLW) form a helical membrane-spanning segment. At 88-103 (SAGCRSKYVGVWGRLR) the chain is on the cytoplasmic side. A helical transmembrane segment spans residues 104–129 (FARKPISIIDLIVVLASMVVLCVGSK). Topologically, residues 130–137 (GQVFATSA) are extracellular. The helical; Voltage-sensor transmembrane segment at 138–153 (IRGIRFLQILRMLHVD) threads the bilayer. The segment at 149 to 157 (MLHVDRQGG) is interaction with KCNE3. The Cytoplasmic segment spans residues 154 to 171 (RQGGTWRLLGSVVFIHRQ). A 1,2-diacyl-sn-glycero-3-phospho-(1D-myo-inositol-4,5-bisphosphate) is bound at residue Q155. The helical transmembrane segment at 172-194 (ELITTLYIGFLGLIFSSYFVYLA) threads the bilayer. Over 195 to 210 (EKDAVNESGQVEFGSY) the chain is Extracellular. N-linked (GlcNAc...) asparagine glycosylation is present at N200. The pore-forming intramembrane region spans 211–231 (ADALWWGVVTVTTIGYGDKVP). Topologically, residues 232–233 (QT) are extracellular. A helical transmembrane segment spans residues 234–259 (WVGKTIASCFSVFAISFFALPAGILG). At 260–582 (SGFALKVQQK…VPRRGPEEGS (323 aa)) the chain is on the cytoplasmic side. The interval 281–293 (AAASLIQTAWRCY) is interaction with CALM. Phosphoserine is present on residues S318 and S320. The interaction with CALM; calcium-dependent stretch occupies residues 426–440 (KVIRRMQYFVAKKKF). Positions 446 to 483 (PYDVRDVIEQYSQGHLNLMVRIKELQRRLDQSIGKPSL) are interaction with KCNE1 C-terminus. The stretch at 496–532 (SNTIGARLNRVEDKVAQLDQRLVLITDMLQQLLSLHH) forms a coiled coil. The tract at residues 499–527 (IGARLNRVEDKVAQLDQRLVLITDMLQQL) is interaction with AKAP9. A C-terminal assembly domain (tetramerization) region spans residues 500 to 531 (GARLNRVEDKVAQLDQRLVLITDMLQQLLSLH). The tract at residues 530 to 582 (LHHGGPPGSRPPSGGGAQVQPCGPTNPELFLPGNALPTYEQLTVPRRGPEEGS) is disordered.

It belongs to the potassium channel family. KQT (TC 1.A.1.15) subfamily. Kv7.1/KCNQ1 sub-subfamily. In terms of assembly, tetramer. Heterotetramer with KCNE1; targets to the membrane raft. Interacts (via C-terminus) with CALM; forms a heterooctameric structure (with 4:4 KCNQ1:CALM stoichiometry) in a calcium-independent manner. Interacts with AKAP9; targets protein kinase A (PKA) catalytic and regulatory subunits and protein phosphatase 1 (PP1) to the KCNQ1-KCNE1 complex, allowing PKA-mediated phosphorylation and increase of delayed rectifier potassium channel activity. Interacts with KCNE2; form a heterooligomer complex that targets to the membrane raft and leading to currents with an apparently instantaneous activation, a rapid deactivation process and a linear current-voltage relationship and decreases the amplitude of the outward current. Interacts with AP2M1; mediates estrogen-induced internalization via clathrin-coated vesicles. Interacts with NEDD4L; promotes internalization and decreases I(Ks) currents. Interacts with USP2; counteracts the NEDD4L-specific down-regulation of I(Ks) and restore plasma membrane localization. Heterotetramer with KCNQ5; has a voltage-gated potassium channel activity. Interacts with KCNE3; four KCNE3 molecules are bound to one KCNQ1 tetramer (4:4 KCNQ1:KCNE3 stoichiometry); alters membrane raft localization; affects KCNQ1 structure and gating properties. Interacts with KCNE4; impairs KCNQ1 localization in lipid rafts and inhibits voltage-gated potassium channel activity. Interacts with KCNE5; impairs KCNQ1 localization in lipid rafts and only conducts current upon strong and continued depolarization. In terms of processing, phosphorylated by PKA; increases delayed rectifier potassium channel activity of the KCNQ1-KCNE1 complex through a macromolecular complex that includes PKA, PP1, and the targeting protein AKAP9. Post-translationally, ubiquitinated by NEDD4L; promotes internalization. The ubiquitinylated form is internalized through a clathrin-mediated endocytosis by interacting with AP2M1 and is recycled back to the cell membrane via RAB4A and RAB11A. Deubiquitinated by USP2; counteracts the NEDD4L-specific down-regulation of I(Ks) and restores the membrane localization.

The protein resides in the cell membrane. Its subcellular location is the cytoplasmic vesicle membrane. It localises to the early endosome. It is found in the membrane raft. The protein localises to the endoplasmic reticulum. The protein resides in the basolateral cell membrane. The enzyme catalyses K(+)(in) = K(+)(out). PIP2 molecule is essential to activate KCNQ channels by inducing the coupling of the voltage-sensing domain (VSD) and the pore-forming domain (PD). Upon channel activation, PIP2 disrupts the VSD-calmodulin/CALM interactions, causing the release of CALM from the VSD which triggers the opening of the gate. Calcium potentiates KCNQ1 channel current through calcium-bound CALM. Calcium-bound CALM competes with PIP2 to stabilize the channel open state. In terms of biological role, pore-forming subunit of the voltage-gated potassium (Kv) channel involved in the regulation of cardiomyocyte excitability and important in normal development and functions of myocardium, inner ear, stomach and colon. Associates with KCNE beta subunits that modulates current kinetics. Induces a voltage-dependent by rapidly activating and slowly deactivating potassium-selective outward current. Also promotes a delayed voltage activated potassium current showing outward rectification characteristic. During beta-adrenergic receptor stimulation participates in cardiac repolarization by associating with KCNE1 to form the I(Ks) cardiac potassium current that increases the amplitude and slows down the activation kinetics of outward potassium current I(Ks). Muscarinic agonist oxotremorine-M strongly suppresses KCNQ1/KCNE1 current. When associated with KCNE3, forms the potassium channel that is important for cyclic AMP-stimulated intestinal secretion of chloride ions. This interaction with KCNE3 is reduced by 17beta-estradiol, resulting in the reduction of currents. During conditions of increased substrate load, maintains the driving force for proximal tubular and intestinal sodium ions absorption, gastric acid secretion, and cAMP-induced jejunal chloride ions secretion. Allows the provision of potassium ions to the luminal membrane of the secretory canaliculus in the resting state as well as during stimulated acid secretion. When associated with KCNE2, forms a heterooligomer complex leading to currents with an apparently instantaneous activation, a rapid deactivation process and a linear current-voltage relationship and decreases the amplitude of the outward current. When associated with KCNE4, inhibits voltage-gated potassium channel activity. When associated with KCNE5, this complex only conducts current upon strong and continued depolarization. Also forms a heterotetramer with KCNQ5 that has a voltage-gated potassium channel activity. Binds with phosphatidylinositol 4,5-bisphosphate. The polypeptide is Potassium voltage-gated channel subfamily KQT member 1 (Felis catus (Cat)).